Reading from the N-terminus, the 440-residue chain is Thymidine phosphorylase (440 aa).

Belongs to the thymidine/pyrimidine-nucleoside phosphorylase family. Homodimer.

The enzyme catalyses thymidine + phosphate = 2-deoxy-alpha-D-ribose 1-phosphate + thymine. Its pathway is pyrimidine metabolism; dTMP biosynthesis via salvage pathway; dTMP from thymine: step 1/2. The enzymes which catalyze the reversible phosphorolysis of pyrimidine nucleosides are involved in the degradation of these compounds and in their utilization as carbon and energy sources, or in the rescue of pyrimidine bases for nucleotide synthesis. This is Thymidine phosphorylase from Shigella dysenteriae serotype 1 (strain Sd197).